A 215-amino-acid chain; its full sequence is Pyrrolidone-carboxylate peptidase (215 aa).

Residues Glu78, Cys141, and His165 contribute to the active site.

This sequence belongs to the peptidase C15 family. As to quaternary structure, homotetramer.

The protein localises to the cytoplasm. The enzyme catalyses Release of an N-terminal pyroglutamyl group from a polypeptide, the second amino acid generally not being Pro.. Its function is as follows. Removes 5-oxoproline from various penultimate amino acid residues except L-proline. This chain is Pyrrolidone-carboxylate peptidase, found in Lactobacillus johnsonii (strain CNCM I-12250 / La1 / NCC 533).